A 240-amino-acid polypeptide reads, in one-letter code: MRSRKSLPRVEQAHLPWHPPGLVAGVDEAGRGPLAGPVVAAAVILDELQPIEGLADSKTLTAARREALFDEIRAKALCCSVAEATVEEIDTLNILQATMLAMRRAVAGLRLKPVRVLVDGNRLPPLDVPAEAIVKGDALVQAISAASILAKVTRDRWCAQLHEAYPHYGFASHKGYGTAEHMAALQAHGACPEHRRSFAPVAAAVQRTVVMQATATIVTTVETTVSVRPAAPRAAEGLHA.

In terms of domain architecture, RNase H type-2 spans 21–210 (GLVAGVDEAG…VAAAVQRTVV (190 aa)). D27, E28, and D119 together coordinate a divalent metal cation.

It belongs to the RNase HII family. The cofactor is Mn(2+). Mg(2+) serves as cofactor.

The protein resides in the cytoplasm. The catalysed reaction is Endonucleolytic cleavage to 5'-phosphomonoester.. Endonuclease that specifically degrades the RNA of RNA-DNA hybrids. This chain is Ribonuclease HII, found in Paracidovorax citrulli (strain AAC00-1) (Acidovorax citrulli).